The sequence spans 969 residues: Integrator complex subunit 4 (969 aa).

HEAT repeat units follow at residues 68 to 107 (AESVEGVVRILLEHYYKENDTSVRLKIASLLGLLSKTAGF), 147 to 185 (VSHRMRLVDVACKHLSDTSHGVRNKCLQLLGCLGSVEAS), 192 to 230 (NAVAKDVQKIIGDYFIDQDPRVRTAAIKAMLQLHERGLK), 231 to 265 (LQQAMYNQACKLLTDDYEQVRSAAVELSWVLSQLY), 279 to 315 (IRLVDDAFGKVCHMVSDGSWVVRVQACKLLGSMLQVS), 371 to 407 (NLIDSGACGAFVHGLEDEMYEVRIAAVESLCLLARSS), 408 to 446 (APFAEKCLDFLVDMFNDEIEEVRLQSIHTMRKISDNITL), and 448 to 486 (EDQLDTVLAVLEDKSRDIREALHELLCCTNVSTKECIQL). A compositionally biased stretch (low complexity) spans 928 to 949 (RASNSTWGESTETVPSTESSTE). Residues 928 to 950 (RASNSTWGESTETVPSTESSTEG) are disordered.

This sequence belongs to the Integrator subunit 4 family. In terms of assembly, component of the Integrator complex, composed of core subunits INTS1, INTS2, INTS3, INTS4, INTS5, INTS6, INTS7, INTS8, INTS9/RC74, INTS10, INTS11/CPSF3L, INTS12, INTS13, INTS14 and INTS15. The core complex associates with protein phosphatase 2A subunits PPP2CA and PPP2R1A, to form the Integrator-PP2A (INTAC) complex. INTS4 is part of the RNA endonuclease subcomplex, composed of INTS4, INTS9, INTS11 and inositol hexakisphosphate (InsP6).

It localises to the nucleus. Its subcellular location is the cytoplasm. Functionally, component of the integrator complex, a multiprotein complex that terminates RNA polymerase II (Pol II) transcription in the promoter-proximal region of genes. The integrator complex provides a quality checkpoint during transcription elongation by driving premature transcription termination of transcripts that are unfavorably configured for transcriptional elongation: the complex terminates transcription by (1) catalyzing dephosphorylation of the C-terminal domain (CTD) of Pol II subunit POLR2A/RPB1 and SUPT5H/SPT5, (2) degrading the exiting nascent RNA transcript via endonuclease activity and (3) promoting the release of Pol II from bound DNA. The integrator complex is also involved in terminating the synthesis of non-coding Pol II transcripts, such as enhancer RNAs (eRNAs), small nuclear RNAs (snRNAs), telomerase RNAs and long non-coding RNAs (lncRNAs). In Xenopus laevis (African clawed frog), this protein is Integrator complex subunit 4 (ints4).